The following is a 953-amino-acid chain: Coatomer subunit beta (953 aa).

7 HEAT repeats span residues 17–54, 96–131, 132–168, 240–276, 277–314, 316–353, and 396–433; these read DSEP…NGEK, QEMI…KEAE, LLEP…NFEH, SERA…SAPT, AIKA…HPSH, RVLQ…SRNV, and DMAA…RFDN.

Oligomeric complex that consists of at least the alpha, beta, beta', gamma, delta, epsilon and zeta subunits.

The protein localises to the cytoplasm. It is found in the golgi apparatus membrane. Its subcellular location is the cytoplasmic vesicle. The protein resides in the COPI-coated vesicle membrane. The coatomer is a cytosolic protein complex that binds to dilysine motifs and reversibly associates with Golgi non-clathrin-coated vesicles, which further mediate biosynthetic protein transport from the ER, via the Golgi up to the trans Golgi network. Coatomer complex is required for budding from Golgi membranes, and is essential for the retrograde Golgi-to-ER transport of dilysine-tagged proteins. The protein is Coatomer subunit beta (COPB1) of Gallus gallus (Chicken).